Consider the following 431-residue polypeptide: Serine hydroxymethyltransferase (431 aa).

121–123 (AHV) provides a ligand contact to (6S)-5,6,7,8-tetrahydrofolate. K227 carries the N6-(pyridoxal phosphate)lysine modification.

This sequence belongs to the SHMT family. As to quaternary structure, homodimer. The cofactor is pyridoxal 5'-phosphate.

The protein localises to the cytoplasm. It participates in amino-acid biosynthesis; glycine biosynthesis; glycine from L-serine: step 1/1. Catalyzes the reversible interconversion of serine and glycine with a modified folate serving as the one-carbon carrier. Also exhibits a pteridine-independent aldolase activity toward beta-hydroxyamino acids, producing glycine and aldehydes, via a retro-aldol mechanism. The polypeptide is Serine hydroxymethyltransferase (Metallosphaera sedula (strain ATCC 51363 / DSM 5348 / JCM 9185 / NBRC 15509 / TH2)).